We begin with the raw amino-acid sequence, 155 residues long: MGRFLFVSFGLLVVFLSLSGTAADCPSDWSSHEGHCYKFFQQKMNWADAERFCSEQAKGGHLVSFQSDGETDFVVNLVTEKIQSTDLYAWIGLRVQNKEKQCSSKWSDGSSVSYENVVGRTVKKCFALEKEQEFFVWINIYCGQQNPFVCKSPPP.

A signal peptide spans 1-23 (MGRFLFVSFGLLVVFLSLSGTAA). Cystine bridges form between cysteine 25/cysteine 36, cysteine 53/cysteine 150, and cysteine 125/cysteine 142. The region spanning 32 to 151 (HEGHCYKFFQ…CGQQNPFVCK (120 aa)) is the C-type lectin domain.

This sequence belongs to the snaclec family. In terms of assembly, heterodimer of subunits alpha and beta; disulfide-linked. Expressed by the venom gland.

Its subcellular location is the secreted. In terms of biological role, this potent antithrombotic agent acts in a calcium-independent manner. Exerts its anticoagulant effect by two distinct mechanisms. It binds to activated thrombin through exosite 1, blocking fibrinogen clotting, platelet activation, factor V activation and other effects, and it interacts with prothrombin (F2), decreasing its proteolytic activation -especially in the presence of factor Va. In vivo, intravenous injection before thrombosis induction causes a significant decrease in thrombus weight. Furthermore, BJC shows a prolonged effect by remaining in the plasma bound to prothrombin for at least 12 hours. The sequence is that of Snaclec bothrojaracin subunit alpha from Bothrops jararaca (Jararaca).